The following is a 137-amino-acid chain: Flagellar basal body rod protein FlgB (137 aa).

The protein belongs to the flagella basal body rod proteins family. In terms of assembly, the basal body constitutes a major portion of the flagellar organelle and consists of a number of rings mounted on a central rod. In Gram-negative bacteria, at least four rings, L, P, S and M are present, whereas Gram-positive bacteria lack the L and P rings. The rod consists of about 26 subunits of FlgG in the distal portion, and FlgB, FlgC and FlgF build up the proximal portion of the rod with about 6 subunits each. Rod assembly occurs by export via the flagellum-specific pathway of its constituent proteins and by their incorporation into the rod structure in the probable order of FlgB, FlgC, FlgF and FlgG. Another protein, FliE, also assembles onto the stable rod structure.

The protein localises to the bacterial flagellum basal body. Its function is as follows. Structural component of flagellum, the bacterial motility apparatus. Part of the rod structure of flagellar basal body. The chain is Flagellar basal body rod protein FlgB from Yersinia ruckeri.